A 616-amino-acid polypeptide reads, in one-letter code: Protein decapentaplegic (616 aa).

An N-terminal signal peptide occupies residues 1–23 (MRAWILLLAVLATSQPIVQVAST). Positions 24 to 474 (EDTSISQRFI…DGRHKARSIR (451 aa)) are excised as a propeptide. The interval 80–188 (SDSDSDNNNN…TSTESHQSPI (109 aa)) is disordered. A compositionally biased stretch (low complexity) spans 86–105 (NNNNNYKNRNNNNNNLNKGP). A compositionally biased stretch (basic residues) spans 106–115 (RNNKNKGNKH). The span at 116-139 (SKSDANRQFNEVHKPRTDQLENSK) shows a compositional bias: basic and acidic residues. Asn147 carries an N-linked (GlcNAc...) asparagine glycan. A compositionally biased stretch (polar residues) spans 173-188 (ATTTALTSTESHQSPI). N-linked (GlcNAc...) asparagine glycosylation is found at Asn360 and Asn395. A disordered region spans residues 470 to 512 (ARSIRDVSGGGGGGGGAGEGGKGNGGGRNRRHQRRPARRKNHE). Gly residues predominate over residues 477–496 (SGGGGGGGGAGEGGKGNGGG). The segment covering 497 to 509 (RNRRHQRRPARRK) has biased composition (basic residues). Disulfide bonds link Cys515–Cys581, Cys544–Cys613, and Cys548–Cys615. Asn557 carries an N-linked (GlcNAc...) asparagine glycan.

Belongs to the TGF-beta family. Heterodimers of scw/dpp are the active subunit, dpp/dpp homodimers elicit a basal response and scw/scw homodimers alone are ineffective in specifying a dorsal pattern. Expressed in the imaginal discs associated with establishment of the proximal-distal axis of the appendages, and midgut mesoderm.

It is found in the secreted. Acts as an extracellular morphogen to establish at least two cellular response thresholds within the dorsal half of the drosophila embryo. Required for the proper development of the embryonic dorsal hypoderm, for viability of larvae and for cell viability of the epithelial cells in the imaginal disks. Acts together with scw. In Drosophila pseudoobscura pseudoobscura (Fruit fly), this protein is Protein decapentaplegic (dpp).